The chain runs to 494 residues: MVPVVALVGRPNVGKSTLFNRLTRTRDALVADFPGLTRDRKYGQAKLGEHEFIVIDTGGIDGSEEGVETKMAQQSLAAIDEADVVLFMVDGRAGLTVADEAIAQHLRRIEKPAILVVNKVDGIDADAASAEFWQLGMDQMYQIAAAHGRGVGALIDRVLNPFAEQMESEQAQLEDLTNEEDPEEEQLEYSEEEAEAEYKRLQDLPIKLAIIGRPNVGKSTLTNRILGEERVVVYDMPGTTRDSIYIPMKRDEREYVLIDTAGVRRRKRINETVEKFSVVKTLQAIEDANVVLLVVDARENISDQDLSLLGFALNSGRSIVIAVNKWDGLSFDVKEHVKKELDRRLGFVDFARIHFISALHGTGVGHLFESVQEAYRSATTRVGTSVLTRIMKMATDDHQPPMVRGRRVKLKYAHAGGYNPPIIVIHGNQVNELPDSYKRYLMNYYRKSLEIMGTPIRIQFQNSENPFEGKTNKMTLSQERQRKRLMSMVKNRRK.

EngA-type G domains lie at 3-166 (PVVA…AEQM) and 206-379 (IKLA…RSAT). Residues 9–16 (GRPNVGKS), 56–60 (DTGGI), 118–121 (NKVD), 212–219 (GRPNVGKS), 259–263 (DTAGV), and 324–327 (NKWD) contribute to the GTP site. Positions 380 to 464 (TRVGTSVLTR…PIRIQFQNSE (85 aa)) constitute a KH-like domain.

The protein belongs to the TRAFAC class TrmE-Era-EngA-EngB-Septin-like GTPase superfamily. EngA (Der) GTPase family. In terms of assembly, associates with the 50S ribosomal subunit.

Functionally, GTPase that plays an essential role in the late steps of ribosome biogenesis. The polypeptide is GTPase Der (Vibrio cholerae serotype O1 (strain ATCC 39541 / Classical Ogawa 395 / O395)).